A 353-amino-acid chain; its full sequence is C-C chemokine receptor type 8 (353 aa).

Residues 1–33 (MDYTMEPNVTMTDYYPDFFTAPCDAEFLLRGSM) are Extracellular-facing. Asn-8 carries an N-linked (GlcNAc...) asparagine glycan. A helical membrane pass occupies residues 34-61 (LYLAILYCVLFVLGLLGNSLVILVLVGC). Over 62-71 (KKLRSITDIY) the chain is Cytoplasmic. The helical transmembrane segment at 72 to 91 (LLNLAASDLLFVLSIPFQTH) threads the bilayer. Over 92 to 105 (NLLDQWVFGTAMCK) the chain is Extracellular. Cysteines 104 and 181 form a disulfide. The helical transmembrane segment at 106–127 (VVSGLYYIGFFSSMFFITLMSV) threads the bilayer. Residues 128–144 (DRYLAIVHAVYAIKVRT) lie on the Cytoplasmic side of the membrane. Residues 145 to 169 (ASVGTALSLTVWLAAVTATIPLMVF) form a helical membrane-spanning segment. Residues 170 to 200 (YQVASEDGMLQCFQFYEEQSLRWKLFTHFEI) are Extracellular-facing. Residues 201-220 (NALGLLLPFAILLFCYVRIL) traverse the membrane as a helical segment. The Cytoplasmic portion of the chain corresponds to 221-236 (QQLRGCLNHNRTRAIK). Residues 237–261 (LVLTVVIVSLLFWVPFNVALFLTSL) traverse the membrane as a helical segment. The Extracellular portion of the chain corresponds to 262 to 278 (HDLHILDGCATRQRLAL). The chain crosses the membrane as a helical span at residues 279–302 (AIHVTEVISFTHCCVNPVIYAFIG). The Cytoplasmic portion of the chain corresponds to 303–353 (EKFKKHLMDVFQKSCSHIFLYLGRQMPVGALERQLSSNQRSSHSSTLDDIL).

It belongs to the G-protein coupled receptor 1 family. As to expression, expressed in thymus.

Its subcellular location is the cell membrane. In terms of biological role, receptor for the CCL1/SCY1/TCA-3 chemokine. In Mus musculus (Mouse), this protein is C-C chemokine receptor type 8 (Ccr8).